The primary structure comprises 277 residues: Protein EURL homolog (277 aa).

A disordered region spans residues 173-201 (LGLWPGERPQNREQRDSRQRRHSGHSREE). Residues 197-229 (HSREELMRKNVEELRQLNEQLLLQIQNVFEELS) are a coiled coil.

The protein belongs to the EURL family.

Plays a role in cortical progenitor cell proliferation and differentiation. May promote dendritic spine development of post-migratory cortical projection neurons by modulating the beta-catenin signaling pathway. The sequence is that of Protein EURL homolog from Danio rerio (Zebrafish).